A 359-amino-acid polypeptide reads, in one-letter code: ATP-dependent (S)-NAD(P)H-hydrate dehydratase (359 aa).

In terms of domain architecture, YjeF C-terminal spans 61–350; sequence LLEEARKVVP…SEINSVFVNN (290 aa). Residues G161 and 214-220 each bind (6S)-NADPHX; that span reads NVVEFQR. ATP is bound by residues 256–260 and 275–284; these read KGEVD and GSPRRCGGQG. (6S)-NADPHX is bound at residue D285.

Belongs to the NnrD/CARKD family. Mg(2+) serves as cofactor.

The catalysed reaction is (6S)-NADHX + ATP = ADP + phosphate + NADH + H(+). The enzyme catalyses (6S)-NADPHX + ATP = ADP + phosphate + NADPH + H(+). Functionally, catalyzes the dehydration of the S-form of NAD(P)HX at the expense of ATP, which is converted to ADP. Together with NAD(P)HX epimerase, which catalyzes the epimerization of the S- and R-forms, the enzyme allows the repair of both epimers of NAD(P)HX, a damaged form of NAD(P)H that is a result of enzymatic or heat-dependent hydration. This is ATP-dependent (S)-NAD(P)H-hydrate dehydratase from Ciona intestinalis (Transparent sea squirt).